Consider the following 515-residue polypeptide: Alpha,alpha-trehalose-phosphate synthase [UDP-forming] 1 (515 aa).

Residues tyrosine 97 and aspartate 151 each coordinate D-glucose 6-phosphate. Residues arginine 287 and lysine 292 each coordinate UDP. UDP-alpha-D-glucose-binding residues include arginine 287 and lysine 292. A D-glucose 6-phosphate-binding site is contributed by arginine 325. UDP contacts are provided by residues valine 364 and 390–394 (LVAYE). 386–394 (DGMNLVAYE) contacts UDP-alpha-D-glucose. Positions 483–515 (GKFQSRKAKLPESADAEKPMNGSGESEESQTTQ) are disordered. Residues 491-500 (KLPESADAEK) show a composition bias toward basic and acidic residues.

Belongs to the glycosyltransferase 20 family.

The enzyme catalyses D-glucose 6-phosphate + UDP-alpha-D-glucose = alpha,alpha-trehalose 6-phosphate + UDP + H(+). The protein operates within carbohydrate biosynthesis. Functionally, synthase catalytic subunit of the trehalose synthase complex that catalyzes the production of trehalose from glucose-6-phosphate and UDP-alpha-D-glucose in a two step process. The disaccharide trehalose serves as a storage carbohydrate that is mobilized during conidial germination. Regulates the level of trehalose as a protectant for cell integrity during thermal and oxidative stress. This is Alpha,alpha-trehalose-phosphate synthase [UDP-forming] 1 from Aspergillus fumigatus (strain ATCC MYA-4609 / CBS 101355 / FGSC A1100 / Af293) (Neosartorya fumigata).